The sequence spans 104 residues: MYAVIRSGGKQYRVSEGDVLRVEKLPAEVGETVQFDDVLMVGSGSEVKIGTPHVEGGSVKAEVLEQDRHRKVEVTKFKRRQGYRRHHGHRQPYTQVKITGISAG.

Positions 81–90 are enriched in basic residues; sequence QGYRRHHGHR. Residues 81 to 104 are disordered; that stretch reads QGYRRHHGHRQPYTQVKITGISAG.

This sequence belongs to the bacterial ribosomal protein bL21 family. In terms of assembly, part of the 50S ribosomal subunit. Contacts protein L20.

Functionally, this protein binds to 23S rRNA in the presence of protein L20. The chain is Large ribosomal subunit protein bL21 from Halorhodospira halophila (strain DSM 244 / SL1) (Ectothiorhodospira halophila (strain DSM 244 / SL1)).